The sequence spans 357 residues: 39 kDa FK506-binding nuclear protein (357 aa).

At S92 the chain carries Phosphoserine. A disordered region spans residues 113–251 (KNSKKSEDDE…ASKDPRTITG (139 aa)). Acidic residues predominate over residues 120–182 (DDEDENESGE…QDSDDSEAEE (63 aa)). Residues S193 and S197 each carry the phosphoserine modification. The span at 222 to 237 (EKPEAKKEQPKAKEPA) shows a compositional bias: basic and acidic residues. One can recognise a PPIase FKBP-type domain in the interval 269-357 (GKRVSVYYIG…VFEVELKAVH (89 aa)).

It belongs to the FKBP-type PPIase family. As to expression, ubiquitously expressed, highest levels in ovary.

It is found in the nucleus. It catalyses the reaction [protein]-peptidylproline (omega=180) = [protein]-peptidylproline (omega=0). Its function is as follows. PPIases accelerate the folding of proteins. May function in a signal transduction cascade during early development. The sequence is that of 39 kDa FK506-binding nuclear protein from Drosophila melanogaster (Fruit fly).